A 100-amino-acid polypeptide reads, in one-letter code: Probable antitoxin MazE4 (100 aa).

Residues proline 77–glutamine 100 form a disordered region.

As to quaternary structure, forms a complex with cognate toxin MazF4.

In terms of biological role, antitoxin component of a type II toxin-antitoxin (TA) system. Labile antitoxin that binds to cognate MazF4 toxin and counteracts its endoribonuclease activity. This chain is Probable antitoxin MazE4 (mazE4), found in Mycobacterium tuberculosis (strain CDC 1551 / Oshkosh).